Consider the following 315-residue polypeptide: Probable cell division protein WhiA (315 aa).

A DNA-binding region (H-T-H motif) is located at residues 277-311 (SLQELGAMMPSGQISKSGVNHRLRKLNQIAEGYQQ).

This sequence belongs to the WhiA family.

Its function is as follows. Involved in cell division and chromosome segregation. The chain is Probable cell division protein WhiA from Lacticaseibacillus paracasei (strain ATCC 334 / BCRC 17002 / CCUG 31169 / CIP 107868 / KCTC 3260 / NRRL B-441) (Lactobacillus paracasei).